A 142-amino-acid chain; its full sequence is ATP synthase epsilon chain (142 aa).

It belongs to the ATPase epsilon chain family. As to quaternary structure, F-type ATPases have 2 components, CF(1) - the catalytic core - and CF(0) - the membrane proton channel. CF(1) has five subunits: alpha(3), beta(3), gamma(1), delta(1), epsilon(1). CF(0) has three main subunits: a, b and c.

The protein resides in the cell inner membrane. Produces ATP from ADP in the presence of a proton gradient across the membrane. This chain is ATP synthase epsilon chain, found in Maridesulfovibrio salexigens (strain ATCC 14822 / DSM 2638 / NCIMB 8403 / VKM B-1763) (Desulfovibrio salexigens).